The sequence spans 132 residues: Interferon-induced transmembrane protein 5 (132 aa).

Over residues 1–11 (MDTAYPREDTR) the composition is skewed to basic and acidic residues. The disordered stretch occupies residues 1 to 21 (MDTAYPREDTRAPTPSKAGAH). At 1–36 (MDTAYPREDTRAPTPSKAGAHTALTLGAPHPPPRDH) the chain is on the extracellular side. Residues 37–57 (LIWSVFSTLYLNLCCLGFLAL) traverse the membrane as a helical segment. Residues cysteine 50, cysteine 51, and cysteine 84 are each lipidated (S-palmitoyl cysteine). Residues 58–86 (AYSIKARDQKVVGDLEAARRFGSKAKCYN) are Cytoplasmic-facing. A helical transmembrane segment spans residues 87-107 (ILAAMWTLVPPLLLLGLVVTG). The Extracellular segment spans residues 108 to 132 (ALHLARLAKDSAAFFSTKFDDADYD).

This sequence belongs to the CD225/Dispanin family. In terms of assembly, interacts with FKBP11. Post-translationally, palmitoylated. Detected in osteoblasts and fibroblasts (at protein level). Detected in bone.

It is found in the cell membrane. Functionally, required for normal bone mineralization. This Homo sapiens (Human) protein is Interferon-induced transmembrane protein 5 (IFITM5).